Here is a 315-residue protein sequence, read N- to C-terminus: Acetyl-coenzyme A carboxylase carboxyl transferase subunit alpha (315 aa).

One can recognise a CoA carboxyltransferase C-terminal domain in the interval 40-293 (LQDKSKTLTE…REELSSQLAM (254 aa)).

The protein belongs to the AccA family. In terms of assembly, acetyl-CoA carboxylase is a heterohexamer composed of biotin carboxyl carrier protein (AccB), biotin carboxylase (AccC) and two subunits each of ACCase subunit alpha (AccA) and ACCase subunit beta (AccD).

It is found in the cytoplasm. The catalysed reaction is N(6)-carboxybiotinyl-L-lysyl-[protein] + acetyl-CoA = N(6)-biotinyl-L-lysyl-[protein] + malonyl-CoA. It participates in lipid metabolism; malonyl-CoA biosynthesis; malonyl-CoA from acetyl-CoA: step 1/1. Component of the acetyl coenzyme A carboxylase (ACC) complex. First, biotin carboxylase catalyzes the carboxylation of biotin on its carrier protein (BCCP) and then the CO(2) group is transferred by the carboxyltransferase to acetyl-CoA to form malonyl-CoA. The chain is Acetyl-coenzyme A carboxylase carboxyl transferase subunit alpha from Pseudomonas syringae pv. syringae (strain B728a).